The primary structure comprises 98 residues: HssA/B-like protein 33 (98 aa).

Disordered stretches follow at residues 1 to 29 (MTLF…SGTS) and 60 to 98 (AKSS…SCSC). A compositionally biased stretch (gly residues) spans 60-72 (AKSSGGSCGGKGG). The segment covering 73 to 88 (PHNHGHGNGHGPHGHG) has biased composition (basic residues). Gly residues predominate over residues 89-98 (GKGSGGSCSC).

This sequence belongs to the hssA/B family.

The protein is HssA/B-like protein 33 (hssl33) of Dictyostelium discoideum (Social amoeba).